Here is a 179-residue protein sequence, read N- to C-terminus: Segregation and condensation protein B (179 aa).

The protein belongs to the ScpB family. In terms of assembly, homodimer. Homodimerization may be required to stabilize the binding of ScpA to the Smc head domains. Component of a cohesin-like complex composed of ScpA, ScpB and the Smc homodimer, in which ScpA and ScpB bind to the head domain of Smc. The presence of the three proteins is required for the association of the complex with DNA.

It is found in the cytoplasm. Participates in chromosomal partition during cell division. May act via the formation of a condensin-like complex containing Smc and ScpA that pull DNA away from mid-cell into both cell halves. This is Segregation and condensation protein B from Staphylococcus haemolyticus (strain JCSC1435).